The following is a 90-amino-acid chain: Probable Fe(2+)-trafficking protein (90 aa).

Belongs to the Fe(2+)-trafficking protein family.

Could be a mediator in iron transactions between iron acquisition and iron-requiring processes, such as synthesis and/or repair of Fe-S clusters in biosynthetic enzymes. This Herminiimonas arsenicoxydans protein is Probable Fe(2+)-trafficking protein.